The following is a 1382-amino-acid chain: Y' element ATP-dependent helicase protein 1 copy 4 (1382 aa).

Residues 383–560 (EIYMADTPSV…LQRIGLTGLA (178 aa)) form the Helicase ATP-binding domain. 396 to 403 (APPGYGKT) is a binding site for ATP. A Helicase C-terminal domain is found at 617–766 (KLLLALFEIE…EFYGLESKKG (150 aa)). Disordered regions lie at residues 840-864 (ANAS…NVRT) and 880-1007 (TTES…DINK). Over residues 880–983 (TTESTNSSTN…ATTTESTNAS (104 aa)) the composition is skewed to low complexity. Over residues 984–1007 (AKEDANKDGNAEDNRFHPVTDINK) the composition is skewed to basic and acidic residues.

Belongs to the helicase family. Yeast subtelomeric Y' repeat subfamily.

In terms of biological role, catalyzes DNA unwinding and is involved in telomerase-independent telomere maintenance. The protein is Y' element ATP-dependent helicase protein 1 copy 4 (YRF1-4) of Saccharomyces cerevisiae (strain ATCC 204508 / S288c) (Baker's yeast).